We begin with the raw amino-acid sequence, 458 residues long: tRNA modification GTPase MnmE (458 aa).

R26, E88, and R127 together coordinate (6S)-5-formyl-5,6,7,8-tetrahydrofolate. In terms of domain architecture, TrmE-type G spans 224-378 (GLSTAIIGRP…IEDRINQLFF (155 aa)). K(+) is bound at residue N234. Residues 234 to 239 (NVGKSS), 253 to 259 (TDIAGTT), and 278 to 281 (DTAG) each bind GTP. S238 provides a ligand contact to Mg(2+). 3 residues coordinate K(+): T253, I255, and T258. Mg(2+) is bound at residue T259. K458 contributes to the (6S)-5-formyl-5,6,7,8-tetrahydrofolate binding site.

Belongs to the TRAFAC class TrmE-Era-EngA-EngB-Septin-like GTPase superfamily. TrmE GTPase family. In terms of assembly, homodimer. Heterotetramer of two MnmE and two MnmG subunits. K(+) is required as a cofactor.

The protein localises to the cytoplasm. Its function is as follows. Exhibits a very high intrinsic GTPase hydrolysis rate. Involved in the addition of a carboxymethylaminomethyl (cmnm) group at the wobble position (U34) of certain tRNAs, forming tRNA-cmnm(5)s(2)U34. This Streptococcus pyogenes serotype M3 (strain ATCC BAA-595 / MGAS315) protein is tRNA modification GTPase MnmE.